Here is a 109-residue protein sequence, read N- to C-terminus: Biphenyl dioxygenase ferredoxin subunit (109 aa).

Residues 4 to 100 (TKACSVDEVP…IRIEGRDVLV (97 aa)) enclose the Rieske domain. Residues C43, H45, C63, and H66 each coordinate [2Fe-2S] cluster.

It belongs to the bacterial ring-hydroxylating dioxygenase ferredoxin component family. In terms of assembly, this dioxygenase system consists of four proteins: the two subunits of the hydroxylase component (BphA1 and BphA2), a ferredoxin (BphA3) and a ferredoxin reductase (BphA4).

Its function is as follows. This protein seems to be a 2Fe-2S ferredoxin. The chain is Biphenyl dioxygenase ferredoxin subunit (bphA3) from Pseudomonas sp. (strain KKS102).